We begin with the raw amino-acid sequence, 388 residues long: Mannitol-1-phosphate 5-dehydrogenase (388 aa).

5 to 16 (AIQFGGGNIGRG) lines the NAD(+) pocket. Residue lysine 213 is part of the active site.

The protein belongs to the mannitol dehydrogenase family. As to quaternary structure, monomer.

The enzyme catalyses D-mannitol 1-phosphate + NAD(+) = beta-D-fructose 6-phosphate + NADH + H(+). Functionally, catalyzes the NAD(H)-dependent interconversion of D-fructose 6-phosphate and D-mannitol 1-phosphate in the mannitol metabolic pathway. In Neosartorya fischeri (strain ATCC 1020 / DSM 3700 / CBS 544.65 / FGSC A1164 / JCM 1740 / NRRL 181 / WB 181) (Aspergillus fischerianus), this protein is Mannitol-1-phosphate 5-dehydrogenase (mpdA).